The primary structure comprises 314 residues: Ferrochelatase (314 aa).

Fe cation is bound by residues His-184 and Glu-259.

Belongs to the ferrochelatase family.

Its subcellular location is the cytoplasm. The catalysed reaction is heme b + 2 H(+) = protoporphyrin IX + Fe(2+). It functions in the pathway porphyrin-containing compound metabolism; protoheme biosynthesis; protoheme from protoporphyrin-IX: step 1/1. Catalyzes the ferrous insertion into protoporphyrin IX. In Chlamydia trachomatis serovar L2 (strain ATCC VR-902B / DSM 19102 / 434/Bu), this protein is Ferrochelatase.